We begin with the raw amino-acid sequence, 211 residues long: MARRGLLLILSSPSGAGKSTLSKRLTAWDPSIRFSVSATTRAPRPGEVDGRDYYFRTRDEFIAAVEAGEMLEHAEVFGNFYGSPKAPVEKALEQGHDTLFDIDWQGGQQIRNSSLGRDVVSIFVLPPSIGELDRRLRSRAQDSEEVIATRMARSKDEISHWAEYDYVLVNRDLDLAEEQLKMILSAERLRRDRQPDLMDFVRGLNGEFETR.

The region spanning 5 to 185 (GLLLILSSPS…AEEQLKMILS (181 aa)) is the Guanylate kinase-like domain. 12–19 (SPSGAGKS) contacts ATP.

It belongs to the guanylate kinase family.

The protein localises to the cytoplasm. The enzyme catalyses GMP + ATP = GDP + ADP. In terms of biological role, essential for recycling GMP and indirectly, cGMP. This is Guanylate kinase from Cereibacter sphaeroides (strain ATCC 17023 / DSM 158 / JCM 6121 / CCUG 31486 / LMG 2827 / NBRC 12203 / NCIMB 8253 / ATH 2.4.1.) (Rhodobacter sphaeroides).